The sequence spans 318 residues: Biotin synthase (318 aa).

The region spanning 44-273 (LCGNKFDLCT…TVQIRLAGGR (230 aa)) is the Radical SAM core domain. [4Fe-4S] cluster-binding residues include C62, C66, and C69. [2Fe-2S] cluster-binding residues include S106, C138, C198, and R268.

It belongs to the radical SAM superfamily. Biotin synthase family. In terms of assembly, homodimer. Requires [4Fe-4S] cluster as cofactor. The cofactor is [2Fe-2S] cluster.

It carries out the reaction (4R,5S)-dethiobiotin + (sulfur carrier)-SH + 2 reduced [2Fe-2S]-[ferredoxin] + 2 S-adenosyl-L-methionine = (sulfur carrier)-H + biotin + 2 5'-deoxyadenosine + 2 L-methionine + 2 oxidized [2Fe-2S]-[ferredoxin]. It functions in the pathway cofactor biosynthesis; biotin biosynthesis; biotin from 7,8-diaminononanoate: step 2/2. Its function is as follows. Catalyzes the conversion of dethiobiotin (DTB) to biotin by the insertion of a sulfur atom into dethiobiotin via a radical-based mechanism. This is Biotin synthase from Clostridium botulinum (strain Hall / ATCC 3502 / NCTC 13319 / Type A).